The primary structure comprises 273 residues: APRWVYHLTSAWMVFVVIASVFTNGLVLAATMRFKKLRHPLNWILVNLAIADLVETIIASTISVVNQMYGYFVLGHPLCVVEGYTASLCGITGLWSLAIISWERWMVVCRPFGNVRFDAKLAIAGIAFSWIWAAVWTAPPIFGWSRYWPHGLKTSCGPDVFSGSSYPGVQSYMIVLMITCCFIPLSVIVLCYLQVWLAIRAVAKQQKESESTQKAEKEVTRMVMVMIFAFCLCWGPYAFFACFAAAHPGYAFHPLVAALPAYFAKSATIYNPI.

Residues 1 to 5 (APRWV) lie on the Extracellular side of the membrane. The chain crosses the membrane as a helical span at residues 6 to 30 (YHLTSAWMVFVVIASVFTNGLVLAA). Over 31–42 (TMRFKKLRHPLN) the chain is Cytoplasmic. Residues 43 to 68 (WILVNLAIADLVETIIASTISVVNQM) form a helical membrane-spanning segment. Over 69–82 (YGYFVLGHPLCVVE) the chain is Extracellular. Residues Cys-79 and Cys-156 are joined by a disulfide bond. Residues 83–102 (GYTASLCGITGLWSLAIISW) form a helical membrane-spanning segment. Over 103 to 121 (ERWMVVCRPFGNVRFDAKL) the chain is Cytoplasmic. The helical transmembrane segment at 122–145 (AIAGIAFSWIWAAVWTAPPIFGWS) threads the bilayer. Residues 146–171 (RYWPHGLKTSCGPDVFSGSSYPGVQS) are Extracellular-facing. The helical transmembrane segment at 172 to 199 (YMIVLMITCCFIPLSVIVLCYLQVWLAI) threads the bilayer. Topologically, residues 200 to 221 (RAVAKQQKESESTQKAEKEVTR) are cytoplasmic. Residues 222–245 (MVMVMIFAFCLCWGPYAFFACFAA) form a helical membrane-spanning segment. At 246–253 (AHPGYAFH) the chain is on the extracellular side. Residues 254–273 (PLVAALPAYFAKSATIYNPI) form a helical membrane-spanning segment. At Lys-265 the chain carries N6-(retinylidene)lysine.

This sequence belongs to the G-protein coupled receptor 1 family. Opsin subfamily. Monomer. Homodimer. Homotetramer. O-glycosylated. In terms of processing, phosphorylated on some or all of the serine and threonine residues present in the C-terminal region. The three color pigments are found in the cone photoreceptor cells.

It is found in the membrane. Visual pigments are the light-absorbing molecules that mediate vision. They consist of an apoprotein, opsin, covalently linked to cis-retinal. In Odocoileus virginianus virginianus (Virginia white-tailed deer), this protein is Medium-wave-sensitive opsin 1 (OPN1MW).